Here is a 244-residue protein sequence, read N- to C-terminus: Dihydropteridine reductase (244 aa).

Ala-2 bears the N-acetylalanine mark. Position 14–38 (Leu-14–Ala-38) interacts with NADP(+). N6-succinyllysine occurs at positions 73, 79, 96, and 102. Catalysis depends on Tyr-150, which acts as the Proton acceptor.

It belongs to the short-chain dehydrogenases/reductases (SDR) family. In terms of assembly, homodimer.

The enzyme catalyses 5,6,7,8-tetrahydropteridine + NAD(+) = 6,7-dihydropteridine + NADH + H(+). It carries out the reaction 5,6,7,8-tetrahydropteridine + NADP(+) = 6,7-dihydropteridine + NADPH + H(+). Functionally, catalyzes the conversion of quinonoid dihydrobiopterin into tetrahydrobiopterin. This chain is Dihydropteridine reductase (QDPR), found in Homo sapiens (Human).